The sequence spans 147 residues: MDHRAAFGYFSNACFKVMLFSSLLASFASSVAFISLITFSLSSSESPNWAELVVNSKWSSSKALSFFPSSKSSVLKTSCWFTISLEDSEMFLSSFFEAAFFLLTNEMIFFILYYFFSCLMFFYVASERNTNPKILQTINTKPLYIKN.

At 1 to 16 the chain is on the extracellular side; sequence MDHRAAFGYFSNACFK. A helical transmembrane segment spans residues 17–37; that stretch reads VMLFSSLLASFASSVAFISLI. Residues 38–105 lie on the Cytoplasmic side of the membrane; the sequence is TFSLSSSESP…FEAAFFLLTN (68 aa). A helical transmembrane segment spans residues 106–126; that stretch reads EMIFFILYYFFSCLMFFYVAS. Over 127–147 the chain is Extracellular; the sequence is ERNTNPKILQTINTKPLYIKN.

The protein resides in the membrane. This is an uncharacterized protein from Saccharomyces cerevisiae (strain ATCC 204508 / S288c) (Baker's yeast).